The chain runs to 657 residues: Endoplasmic reticulum chaperone BiP homolog (657 aa).

The signal sequence occupies residues 1 to 17 (MKVFSLILIAFVANAYC). ATP is bound by residues 38–41 (GTTY), Lys-99, 229–231 (GGT), 295–302 (EKAKRALS), and 366–369 (GSTR). The tract at residues 128-282 (KPNVEVKVGS…KKKSGKDLRK (155 aa)) is nucleotide-binding (NBD). Residues 402–502 (VQAGVIGGVE…PRGVPQIEVT (101 aa)) are substrate-binding (SBD). Residues 607-657 (LGSNQDASTEENKEQKKELESVVQPIVSKLYSAGGQGEQASEEPSEDHDEL) are disordered. The span at 616–626 (EENKEQKKELE) shows a compositional bias: basic and acidic residues. A compositionally biased stretch (acidic residues) spans 646 to 657 (ASEEPSEDHDEL). Positions 654–657 (HDEL) match the Prevents secretion from ER motif.

This sequence belongs to the heat shock protein 70 family.

The protein resides in the endoplasmic reticulum lumen. The catalysed reaction is ATP + H2O = ADP + phosphate + H(+). The chaperone activity is regulated by ATP-induced allosteric coupling of the nucleotide-binding (NBD) and substrate-binding (SBD) domains. In the ADP-bound and nucleotide-free (apo) states, the two domains have little interaction. In contrast, in the ATP-bound state the two domains are tightly coupled, which results in drastically accelerated kinetics in both binding and release of polypeptide substrates. J domain-containing co-chaperones stimulate the ATPase activity and are required for efficient substrate recognition. Functionally, endoplasmic reticulum chaperone that plays a key role in protein folding and quality control in the endoplasmic reticulum lumen. Required for ER dynamics during the first embryonic cell divisions. Specifically, controls ER transition into sheet-like structures at the onset of mitosis, possibly by regulating homotypic membrane fusion. The sequence is that of Endoplasmic reticulum chaperone BiP homolog (hsp-4) from Caenorhabditis elegans.